A 200-amino-acid chain; its full sequence is dTTP/UTP pyrophosphatase (200 aa).

Asp-81 (proton acceptor) is an active-site residue.

It belongs to the Maf family. YhdE subfamily. Requires a divalent metal cation as cofactor.

The protein resides in the cytoplasm. It carries out the reaction dTTP + H2O = dTMP + diphosphate + H(+). The catalysed reaction is UTP + H2O = UMP + diphosphate + H(+). Functionally, nucleoside triphosphate pyrophosphatase that hydrolyzes dTTP and UTP. May have a dual role in cell division arrest and in preventing the incorporation of modified nucleotides into cellular nucleic acids. In Cupriavidus pinatubonensis (strain JMP 134 / LMG 1197) (Cupriavidus necator (strain JMP 134)), this protein is dTTP/UTP pyrophosphatase.